Here is a 553-residue protein sequence, read N- to C-terminus: MPQLNSGGGDELGANDELIRFKDEGEQEEKSPGEGSAEGDLADVKSSLVNESENHSSDSDSEVERRPPPRETFEKPRDYLSEAFRRQQDAAFFKGPPYAGYPFLMIPDLGGHYLPNGALSPSARTYLQMKWPLLDSPSTAGLKDARSPSPAHLSNKVPVVQHPHHMHPLTPLITYSNEHFSPGTPPGHLSPEIDPKTGIPRPPHPSELSPYYPLSPGAVGQIPHPLGWLVPQQGQPMYSIPPGGFRHPYPALAMNASMSSLVSSRFSPHMVPPPHHGLHTSGIPHPAIVSPIVKQEPSSGNISPNLITKPSVVVKKEEEKKPHIKKPLNAFMLYMKEMRAKVVAECTLKESAAINQILGRRWHSLSREEQAKYYELARKERQLHSQLYPTWSARDNYGKRKKRKRDKQSPEMEITKTKKMCVQHLPADKSCDSPASSHGSMLDSPATPSAALASPAAPAATHSEQAQPLSLTTKPEARAQLSLSHSAAFLASKSPPSSSLSGSLSSPVGSPLLSRPIPLTSSILSPPCVFPSALQALPLLQAQPLSLVTKSSD.

Gly residues predominate over residues 1-11; the sequence is MPQLNSGGGDE. Positions 1-61 are interaction with CTNNB1; sequence MPQLNSGGGD…SENHSSDSDS (61 aa). Disordered stretches follow at residues 1–77, 183–213, and 392–474; these read MPQL…EKPR, GTPP…PYYP, and SARD…LTTK. Basic and acidic residues-rich tracts occupy residues 17-32 and 52-77; these read ELIR…EKSP and SENH…EKPR. Residues 109-312 are interaction with AES and TLE4; it reads LGGHYLPNGA…SPNLITKPSV (204 aa). Residues 324 to 392 constitute a DNA-binding region (HMG box); it reads IKKPLNAFML…LHSQLYPTWS (69 aa). The segment covering 407-416 has biased composition (basic and acidic residues); sequence KQSPEMEITK. An interaction with CTBP region spans residues 408-553; that stretch reads QSPEMEITKT…PLSLVTKSSD (146 aa). Low complexity predominate over residues 444 to 463; the sequence is SPATPSAALASPAAPAATHS. Positions 464–473 are enriched in polar residues; it reads EQAQPLSLTT.

This sequence belongs to the TCF/LEF family. In terms of assembly, interacts with csnk1e, ctnnb1, ctbp, dact1 and gsk3b. May interact with ase and tle4. Post-translationally, phosphorylated. Phosphorylation by csnk1e promotes binding to ctnnb1 while phosphorylation by gsk3b may reverse this effect.

It is found in the nucleus. Its function is as follows. Participates in the Wnt signaling pathway. Binds to DNA and acts as a repressor in the absence of ctnnb1, and as an activator in its presence. Required early in development for the establishment of the dorsal body axis in response to maternal Wnt signaling. This Xenopus tropicalis (Western clawed frog) protein is Transcription factor 7-like 1 (tcf7l1).